Consider the following 586-residue polypeptide: Pyruvate kinase (586 aa).

Arg-32 lines the substrate pocket. K(+) contacts are provided by Asn-34, Ser-36, Asp-66, and Thr-67. 34–37 (NFSH) provides a ligand contact to ATP. ATP is bound by residues Arg-73 and Lys-156. Residue Glu-222 coordinates Mg(2+). Substrate-binding residues include Gly-245, Asp-246, and Thr-278. Asp-246 provides a ligand contact to Mg(2+).

Belongs to the pyruvate kinase family. It in the C-terminal section; belongs to the PEP-utilizing enzyme family. Mg(2+) is required as a cofactor. Requires K(+) as cofactor.

The catalysed reaction is pyruvate + ATP = phosphoenolpyruvate + ADP + H(+). It participates in carbohydrate degradation; glycolysis; pyruvate from D-glyceraldehyde 3-phosphate: step 5/5. The chain is Pyruvate kinase (pyk) from Staphylococcus saprophyticus subsp. saprophyticus (strain ATCC 15305 / DSM 20229 / NCIMB 8711 / NCTC 7292 / S-41).